Consider the following 387-residue polypeptide: Exodeoxyribonuclease 7 large subunit (387 aa).

This sequence belongs to the XseA family. Heterooligomer composed of large and small subunits.

It localises to the cytoplasm. The catalysed reaction is Exonucleolytic cleavage in either 5'- to 3'- or 3'- to 5'-direction to yield nucleoside 5'-phosphates.. Its function is as follows. Bidirectionally degrades single-stranded DNA into large acid-insoluble oligonucleotides, which are then degraded further into small acid-soluble oligonucleotides. The protein is Exodeoxyribonuclease 7 large subunit of Campylobacter jejuni subsp. jejuni serotype O:23/36 (strain 81-176).